The chain runs to 339 residues: Anthranilate phosphoribosyltransferase (339 aa).

5-phospho-alpha-D-ribose 1-diphosphate is bound by residues glycine 82, glycine 85 to aspartate 86, threonine 90, asparagine 92 to threonine 95, lysine 110 to glycine 118, and serine 122. Glycine 82 serves as a coordination point for anthranilate. Residue serine 94 participates in Mg(2+) binding. Asparagine 113 is an anthranilate binding site. An anthranilate-binding site is contributed by arginine 168. Mg(2+) is bound by residues aspartate 226 and glutamate 227.

Belongs to the anthranilate phosphoribosyltransferase family. As to quaternary structure, homodimer. The cofactor is Mg(2+).

The catalysed reaction is N-(5-phospho-beta-D-ribosyl)anthranilate + diphosphate = 5-phospho-alpha-D-ribose 1-diphosphate + anthranilate. It participates in amino-acid biosynthesis; L-tryptophan biosynthesis; L-tryptophan from chorismate: step 2/5. Functionally, catalyzes the transfer of the phosphoribosyl group of 5-phosphorylribose-1-pyrophosphate (PRPP) to anthranilate to yield N-(5'-phosphoribosyl)-anthranilate (PRA). This Methanosphaerula palustris (strain ATCC BAA-1556 / DSM 19958 / E1-9c) protein is Anthranilate phosphoribosyltransferase.